The primary structure comprises 468 residues: Siroheme synthase (468 aa).

The tract at residues Met1–Leu203 is precorrin-2 dehydrogenase /sirohydrochlorin ferrochelatase. Residues Thr22–Val23 and Pro43–Lys44 each bind NAD(+). Residue Ser128 is modified to Phosphoserine. The segment at Gly216 to Arg468 is uroporphyrinogen-III C-methyltransferase. Pro225 serves as a coordination point for S-adenosyl-L-methionine. Asp248 acts as the Proton acceptor in catalysis. The active-site Proton donor is Lys270. S-adenosyl-L-methionine-binding positions include Gly301–Asp303, Ile306, Thr331–Ala332, Met383, and Gly412.

It in the N-terminal section; belongs to the precorrin-2 dehydrogenase / sirohydrochlorin ferrochelatase family. This sequence in the C-terminal section; belongs to the precorrin methyltransferase family.

It catalyses the reaction uroporphyrinogen III + 2 S-adenosyl-L-methionine = precorrin-2 + 2 S-adenosyl-L-homocysteine + H(+). It carries out the reaction precorrin-2 + NAD(+) = sirohydrochlorin + NADH + 2 H(+). The catalysed reaction is siroheme + 2 H(+) = sirohydrochlorin + Fe(2+). It participates in cofactor biosynthesis; adenosylcobalamin biosynthesis; precorrin-2 from uroporphyrinogen III: step 1/1. It functions in the pathway cofactor biosynthesis; adenosylcobalamin biosynthesis; sirohydrochlorin from precorrin-2: step 1/1. The protein operates within porphyrin-containing compound metabolism; siroheme biosynthesis; precorrin-2 from uroporphyrinogen III: step 1/1. Its pathway is porphyrin-containing compound metabolism; siroheme biosynthesis; siroheme from sirohydrochlorin: step 1/1. It participates in porphyrin-containing compound metabolism; siroheme biosynthesis; sirohydrochlorin from precorrin-2: step 1/1. Functionally, multifunctional enzyme that catalyzes the SAM-dependent methylations of uroporphyrinogen III at position C-2 and C-7 to form precorrin-2 via precorrin-1. Then it catalyzes the NAD-dependent ring dehydrogenation of precorrin-2 to yield sirohydrochlorin. Finally, it catalyzes the ferrochelation of sirohydrochlorin to yield siroheme. This chain is Siroheme synthase, found in Nitrosococcus oceani (strain ATCC 19707 / BCRC 17464 / JCM 30415 / NCIMB 11848 / C-107).